The chain runs to 486 residues: Beta-barrel assembly-enhancing protease (486 aa).

Residues 1–19 form the signal peptide; it reads MIATLLSSLLLTGPISAGA. Histidine 134 contributes to the Zn(2+) binding site. The active site involves glutamate 135. 2 residues coordinate Zn(2+): histidine 138 and glutamate 199. The active-site Proton donor is the aspartate 203.

This sequence belongs to the peptidase M48 family. BepA subfamily. It depends on Zn(2+) as a cofactor.

The protein resides in the periplasm. In terms of biological role, functions both as a chaperone and a metalloprotease. Maintains the integrity of the outer membrane by promoting either the assembly or the elimination of outer membrane proteins, depending on their folding state. This is Beta-barrel assembly-enhancing protease from Yersinia pestis.